Reading from the N-terminus, the 729-residue chain is Dipeptidyl peptidase 3 (729 aa).

Zn(2+) is bound at residue histidine 459. Residue glutamate 460 is part of the active site. Zn(2+) is bound by residues histidine 464 and glutamate 517.

It belongs to the peptidase M49 family. The cofactor is Zn(2+).

The protein localises to the cytoplasm. It catalyses the reaction Release of an N-terminal dipeptide from a peptide comprising four or more residues, with broad specificity. Also acts on dipeptidyl 2-naphthylamides.. The sequence is that of Dipeptidyl peptidase 3 (dpp3) from Nematostella vectensis (Starlet sea anemone).